Consider the following 194-residue polypeptide: Anaphase-promoting complex subunit CDC26 (194 aa).

A disordered region spans residues 47–194 (EPMDQSEPPR…PSSNTRSHRH (148 aa)). 2 stretches are compositionally biased toward polar residues: residues 79-94 (GECTRTSIAPTLTSAR) and 102-112 (LTLSTPVNPVS). Low complexity-rich tracts occupy residues 154–166 (DESPTPSDSPESP) and 174–194 (TPGNPTSTSGGPSSNTRSHRH).

Belongs to the CDC26 family. In terms of assembly, the APC/C complex is probably composed of at least 12 subunits: apc-2, apc-10, apc-11, cdc-26, emb-1, emb-27, emb-30, mat-1, mat-2, mat-3, such-1 and gfi-3.

It is found in the nucleus. The protein operates within protein modification; protein ubiquitination. Functionally, probable component of the anaphase promoting complex/cyclosome (APC/C), a cell cycle-regulated E3 ubiquitin ligase that controls progression through mitosis and the G1 phase of the cell cycle. The APC/C complex acts by mediating ubiquitination and subsequent degradation of target proteins. Developmental role in early embryogenesis and the metaphase to anaphase transition in meiosis and mitosis. Required for embryonic anterior-posterior axis formation. In Caenorhabditis elegans, this protein is Anaphase-promoting complex subunit CDC26.